A 91-amino-acid chain; its full sequence is Small ribosomal subunit protein bS20 (91 aa).

A disordered region spans residues Met-1–Thr-26.

It belongs to the bacterial ribosomal protein bS20 family.

Its function is as follows. Binds directly to 16S ribosomal RNA. The polypeptide is Small ribosomal subunit protein bS20 (Leptospira biflexa serovar Patoc (strain Patoc 1 / Ames)).